We begin with the raw amino-acid sequence, 309 residues long: Probable ABC transporter permease protein y4oQ (309 aa).

7 helical membrane-spanning segments follow: residues 25-45 (VVWF…VPLV), 89-109 (LIYA…FAVL), 123-143 (LMLI…KLLY), 174-194 (VIIV…LAGL), 221-241 (LPHL…GVMA), 246-266 (IFLL…VYAY), and 278-298 (TTAI…PLIW). The region spanning 85–296 (IRVTLIYAVV…VFVLAISAPL (212 aa)) is the ABC transmembrane type-1 domain.

This sequence belongs to the binding-protein-dependent transport system permease family. MalFG subfamily.

Its subcellular location is the cell inner membrane. Probably part of the binding-protein-dependent transport system y4oPQRS. This system probably transports a sugar-like molecule. Probably responsible for the translocation of the substrate across the membrane. This is Probable ABC transporter permease protein y4oQ from Sinorhizobium fredii (strain NBRC 101917 / NGR234).